Reading from the N-terminus, the 98-residue chain is Citrate lyase acyl carrier protein (98 aa).

Position 14 is an O-(phosphoribosyl dephospho-coenzyme A)serine (serine 14).

Belongs to the CitD family. As to quaternary structure, oligomer with a subunit composition of (alpha,beta,gamma)6.

It is found in the cytoplasm. Functionally, covalent carrier of the coenzyme of citrate lyase. The chain is Citrate lyase acyl carrier protein from Shigella boydii serotype 18 (strain CDC 3083-94 / BS512).